Consider the following 238-residue polypeptide: Dof zinc finger protein MNB1A (238 aa).

Over residues 1–13 the composition is skewed to low complexity; that stretch reads MQEASSAAAAGAE. The interval 1–48 is disordered; it reads MQEASSAAAAGAEPGRRAAQHQFAGVDLRRPKGYAAPAPAPAVGEGDP. A Dof-type zinc finger spans residues 47-101; the sequence is DPCPRCASRDTKFCYYNNYNTSQPRHFCKGCRRYWTKGGTLRNVPVGGGTRKKPS. Zn(2+) contacts are provided by cysteine 49, cysteine 52, cysteine 74, and cysteine 77. The interval 85-155 is disordered; sequence GTLRNVPVGG…TATTTTTTSE (71 aa). The span at 119-130 shows a compositional bias: basic residues; it reads PKKKPASKKRRV. Positions 138–155 are enriched in low complexity; it reads ATAADPGKTATTTTTTSE.

As to expression, expressed in all tissues examined.

The protein resides in the nucleus. In terms of biological role, transcription factor that binds specifically to a 5'-AA[AG]G-3' consensus core sequence at the MNF1-binding site. The chain is Dof zinc finger protein MNB1A (MNB1A) from Zea mays (Maize).